Consider the following 223-residue polypeptide: uncharacterized protein (223 aa).

4 consecutive transmembrane segments (helical) span residues 22–42 (LTVGLFVITFFNPGANLFVVV), 59–79 (GVALGDAFYSGLGLFGLATLI), 85–105 (IFSLIRIVGGAYLLWFAWCSM), and 164–184 (MAWAGIVLASIIWRVFLSQAF).

Belongs to the Rht family.

It is found in the cell membrane. This is an uncharacterized protein from Escherichia coli (strain K12).